We begin with the raw amino-acid sequence, 81 residues long: Small ribosomal subunit protein bS16 (81 aa).

The protein belongs to the bacterial ribosomal protein bS16 family.

This chain is Small ribosomal subunit protein bS16, found in Coprothermobacter proteolyticus (strain ATCC 35245 / DSM 5265 / OCM 4 / BT).